A 411-amino-acid polypeptide reads, in one-letter code: Carbohydrate sulfotransferase 5 (411 aa).

At 1 to 30 (MGMRARVPKVAHSTRRPPAARMWLPRFSSK) the chain is on the cytoplasmic side. The chain crosses the membrane as a helical; Signal-anchor for type II membrane protein span at residues 31–48 (TVTVLLLAQTTCLLLFII). The Lumenal portion of the chain corresponds to 49–411 (SRPGPSSPAG…PDHFSWASPD (363 aa)). Residue 71-77 (WRSGSSF) coordinates 3'-phosphoadenylyl sulfate. Residue Asn-138 is glycosylated (N-linked (GlcNAc...) asparagine). 224–232 (RDPRAVLRS) is a 3'-phosphoadenylyl sulfate binding site. N-linked (GlcNAc...) asparagine glycans are attached at residues Asn-327 and Asn-350.

Belongs to the sulfotransferase 1 family. Gal/GlcNAc/GalNAc subfamily. Predominantly expressed in small and large intestines and colon. Weakly expressed in lymphocytes. Not expressed in other tissues. Down-regulated in colonic adenocarcinomas.

The protein localises to the golgi apparatus membrane. In terms of biological role, sulfotransferase that utilizes 3'-phospho-5'-adenylyl sulfate (PAPS) as sulfonate donor to catalyze the transfer of sulfate to position 6 of non-reducing N-acetylglucosamine (GlcNAc) residues and O-linked sugars of mucin-type acceptors. Acts on the non-reducing terminal GlcNAc of short carbohydrate substrates. However, it does not transfer sulfate to longer carbohydrate substrates that have poly-N-acetyllactosamine structures. Has no activity toward keratan. Not involved in generating HEV-expressed ligands for SELL. Its substrate specificity may be influenced by its subcellular location. The sequence is that of Carbohydrate sulfotransferase 5 (CHST5) from Homo sapiens (Human).